Consider the following 369-residue polypeptide: Serine/threonine-protein phosphatase PP2A-1 catalytic subunit (369 aa).

The disordered stretch occupies residues 1–57 (MDTDLDVPMQDAVTEQLTPTVSEDMDLNNNSSDNNAEEFSVDDLKPGSSGIADHKSS). The Mn(2+) site is built by Asp-117, His-119, Asp-145, and Asn-177. His-178 acts as the Proton donor in catalysis. Mn(2+)-binding residues include His-227 and His-301. The disordered stretch occupies residues 348-369 (QYDPSVRPGEPSVSRKTPDYFL). At Leu-369 the chain carries Leucine methyl ester.

Belongs to the PPP phosphatase family. PP-2A subfamily. In terms of assembly, inactivated in a complex with phosphatase methylesterase PPE1 (PP2Ai). Interacts with phosphatase 2A activator RRD2, which can reactivate PP2Ai by dissociating the catalytic subunit from the complex. Forms a ternary complex with RRD2-TAP42. Mn(2+) serves as cofactor. Reversibly methyl esterified on Leu-369 by leucine carboxyl methyltransferase 1 (PPM1) and protein phosphatase methylesterase 1 (PPE1). Carboxyl methylation influences the affinity of the catalytic subunit for the different regulatory subunits, thereby modulating the PP2A holoenzyme's substrate specificity, enzyme activity and cellular localization.

The enzyme catalyses O-phospho-L-seryl-[protein] + H2O = L-seryl-[protein] + phosphate. It catalyses the reaction O-phospho-L-threonyl-[protein] + H2O = L-threonyl-[protein] + phosphate. Its function is as follows. Exact function not known, phosphatase 2A performs an essential cellular function. This is Serine/threonine-protein phosphatase PP2A-1 catalytic subunit (PPH21) from Saccharomyces cerevisiae (strain ATCC 204508 / S288c) (Baker's yeast).